Here is an 83-residue protein sequence, read N- to C-terminus: Small ribosomal subunit protein uS17 (83 aa).

Belongs to the universal ribosomal protein uS17 family. In terms of assembly, part of the 30S ribosomal subunit.

Functionally, one of the primary rRNA binding proteins, it binds specifically to the 5'-end of 16S ribosomal RNA. This is Small ribosomal subunit protein uS17 from Nitratiruptor sp. (strain SB155-2).